The chain runs to 986 residues: MVSKSDQLLIVVSILEGRHFPKRPKHMLVVEAKFDGEQLATDPVDHTDQPEFATELAWEIDRKALHQHRLQRTPIKLQCFALDPVTSAKETIGYIVLDLRTAQETKQAPKWYQLLSNKYTKFKSEIQISIALETDTKPPVDSFKAKGAPPRDGKVPAILAGLDPRDIVAVLNEEGGYHQIGPAEYCTDSFIMSVTIAFATQLEQLIPCTMKLPERQPEFFFYYSLLGNDVTNEPFNDLINPNFEPERASVRIRSSVEILRVYLALQSKLQIHLCCGDQSLGSTEIPLTGLLKKGSTEINQHPVTVEGAFTLDPPNRAKQKLAPIPVELAPTVGVSVALQREGIDSQSLIELKTQNEHEPEHSKKKVLTPIKEKTLTGPKSPTVSPVPSHNQSPPTKDDATESEVESLQYDKDTKPNPKASSSVPASLAQLVTTSNASEVASGQKIAVPATSHHFCFSIDLRSIHALEIGFPINCILRYSYPFFGSAAPIMTNPPVEVRKNMEVFLPQSYCAFDFATMPHQLQDTFLRIPLLVELWHKDKMSKDLLLGIARIQLSNILSSEKTRFLGSNGEQCWRQTYSESVPVIAAQGSNNRIADLSYTVTLEDYGLVKMREIFISDSSQGVSAVQQKPSSLPPAPCPSEIQTEPRETLEYKAALELEMWKEMQEDIFENQLKQKELAHMQALAEEWKKRDRERESLVKKKVAEYTILEGKLQKTLIDLEKREQQLASVESELQREKKELQSERQRNLQELQDSIRRAKEDCIHQVELERLKIKQLEEDKHRLQQQLNDAENKYKILEKEFQQFKDQQNNKPEIRLQSEINLLTLEKVELERKLESATKSKLHYKQQWGRALKELARLKQREQESQMARLKKQQEELEQMRLRYLAAEEKDTVKTERQELLDIRNELNRLRQQEQKQYQDSTEIASGKKDGPHGSVLEEGLDDYLTRLIEERDTLMRTGVYNHEDRIISELDRQIREILAKSNASN.

A C2 1 domain is found at 1–112 (MVSKSDQLLI…QETKQAPKWY (112 aa)). Residues 350-424 (ELKTQNEHEP…PNPKASSSVP (75 aa)) are disordered. A compositionally biased stretch (polar residues) spans 377 to 394 (GPKSPTVSPVPSHNQSPP). One can recognise a C2 2 domain in the interval 433-566 (TSNASEVASG…LSSEKTRFLG (134 aa)). The stretch at 669 to 925 (ENQLKQKELA…KQYQDSTEIA (257 aa)) forms a coiled coil. The disordered stretch occupies residues 914–937 (EQKQYQDSTEIASGKKDGPHGSVL). Positions 915–924 (QKQYQDSTEI) are enriched in polar residues. Serine 935 carries the post-translational modification Phosphoserine.

This sequence belongs to the CEP120 family. Interacts with TACC2, TACC3, CCDC52, TALPID3.

The protein localises to the cytoplasm. Its subcellular location is the cytoskeleton. It localises to the microtubule organizing center. The protein resides in the centrosome. In terms of biological role, plays a role in the microtubule-dependent coupling of the nucleus and the centrosome. Involved in the processes that regulate centrosome-mediated interkinetic nuclear migration (INM) of neural progenitors and for proper positioning of neurons during brain development. Also implicated in the migration and selfrenewal of neural progenitors. Required for centriole duplication and maturation during mitosis and subsequent ciliogenesis. Required for the recruitment of CEP295 to the proximal end of new-born centrioles at the centriolar microtubule wall during early S phase in a PLK4-dependent manner. The sequence is that of Centrosomal protein of 120 kDa (CEP120) from Homo sapiens (Human).